The primary structure comprises 449 residues: Doublesex- and mab-3-related transcription factor A2 (449 aa).

Positions 57–104 form a DNA-binding region, DM; sequence CARCRNHGVVSALKGHKRYCRWKDCMCAKCTLIAERQRVMAAQVALRR. A disordered region spans residues 163-259; the sequence is FPKTQLSGST…PSPSSAASRH (97 aa). A compositionally biased stretch (polar residues) spans 166-187; the sequence is TQLSGSTTTQKSVGKPASTESD. Positions 230–240 are enriched in low complexity; that stretch reads GSVSSLGSDSG. The 36-residue stretch at 260-295 folds into the DMA domain; sequence MNAIDILTRVFPSHKRSVLELVLQGCGKDVVQAIEQ.

The protein belongs to the DMRT family. Expressed in brain and eye.

It localises to the nucleus. Its function is as follows. May be involved in sexual development. In Xiphophorus maculatus (Southern platyfish), this protein is Doublesex- and mab-3-related transcription factor A2 (dmrta2).